Reading from the N-terminus, the 704-residue chain is Elongation factor G 1 (704 aa).

In terms of domain architecture, tr-type G spans 8 to 285 (EKIRNIGISA…AVCAFLPNPK (278 aa)). GTP-binding positions include 17–24 (AHIDSGKT), 84–88 (DTPGH), and 138–141 (NKMD).

The protein belongs to the TRAFAC class translation factor GTPase superfamily. Classic translation factor GTPase family. EF-G/EF-2 subfamily.

The protein resides in the cytoplasm. Catalyzes the GTP-dependent ribosomal translocation step during translation elongation. During this step, the ribosome changes from the pre-translocational (PRE) to the post-translocational (POST) state as the newly formed A-site-bound peptidyl-tRNA and P-site-bound deacylated tRNA move to the P and E sites, respectively. Catalyzes the coordinated movement of the two tRNA molecules, the mRNA and conformational changes in the ribosome. This Myxococcus xanthus (strain DK1622) protein is Elongation factor G 1.